We begin with the raw amino-acid sequence, 316 residues long: Beta-ketoacyl-[acyl-carrier-protein] synthase III 4 (316 aa).

Residues cysteine 114 and histidine 242 contribute to the active site. The interval 243–247 (QANLR) is ACP-binding. The active site involves asparagine 272.

This sequence belongs to the thiolase-like superfamily. FabH family. In terms of assembly, homodimer.

It is found in the cytoplasm. The enzyme catalyses malonyl-[ACP] + acetyl-CoA + H(+) = 3-oxobutanoyl-[ACP] + CO2 + CoA. It participates in lipid metabolism; fatty acid biosynthesis. Functionally, catalyzes the condensation reaction of fatty acid synthesis by the addition to an acyl acceptor of two carbons from malonyl-ACP. Catalyzes the first condensation reaction which initiates fatty acid synthesis and may therefore play a role in governing the total rate of fatty acid production. Possesses both acetoacetyl-ACP synthase and acetyl transacylase activities. Its substrate specificity determines the biosynthesis of branched-chain and/or straight-chain of fatty acids. In Streptomyces coelicolor (strain ATCC BAA-471 / A3(2) / M145), this protein is Beta-ketoacyl-[acyl-carrier-protein] synthase III 4.